The sequence spans 716 residues: Fatty acid oxidation complex subunit alpha (716 aa).

Residues 1 to 189 are enoyl-CoA hydratase/isomerase; the sequence is MIYQSPTIQV…KVGAVDAVVA (189 aa). Aspartate 296 contributes to the substrate binding site. Residues 311-716 form a 3-hydroxyacyl-CoA dehydrogenase region; it reads KEVNNAAVLG…AANNGSYYQA (406 aa). NAD(+) contacts are provided by residues methionine 324, aspartate 343, 400–402, lysine 407, and serine 429; that span reads VVE. Catalysis depends on histidine 450, which acts as the For 3-hydroxyacyl-CoA dehydrogenase activity. An NAD(+)-binding site is contributed by asparagine 453. Asparagine 500 and tyrosine 660 together coordinate substrate.

In the N-terminal section; belongs to the enoyl-CoA hydratase/isomerase family. This sequence in the C-terminal section; belongs to the 3-hydroxyacyl-CoA dehydrogenase family. Heterotetramer of two alpha chains (FadB) and two beta chains (FadA).

It catalyses the reaction a (3S)-3-hydroxyacyl-CoA + NAD(+) = a 3-oxoacyl-CoA + NADH + H(+). It carries out the reaction a (3S)-3-hydroxyacyl-CoA = a (2E)-enoyl-CoA + H2O. The enzyme catalyses a 4-saturated-(3S)-3-hydroxyacyl-CoA = a (3E)-enoyl-CoA + H2O. The catalysed reaction is (3S)-3-hydroxybutanoyl-CoA = (3R)-3-hydroxybutanoyl-CoA. It catalyses the reaction a (3Z)-enoyl-CoA = a 4-saturated (2E)-enoyl-CoA. It carries out the reaction a (3E)-enoyl-CoA = a 4-saturated (2E)-enoyl-CoA. The protein operates within lipid metabolism; fatty acid beta-oxidation. Its function is as follows. Involved in the aerobic and anaerobic degradation of long-chain fatty acids via beta-oxidation cycle. Catalyzes the formation of 3-oxoacyl-CoA from enoyl-CoA via L-3-hydroxyacyl-CoA. It can also use D-3-hydroxyacyl-CoA and cis-3-enoyl-CoA as substrate. This is Fatty acid oxidation complex subunit alpha from Shewanella baltica (strain OS223).